We begin with the raw amino-acid sequence, 407 residues long: MSYPIERVRADFPLLASEVNGQPLAYLDSAASAQKPHSVIDREAEFYRHEYAAVHRGIHTLSAQATSAMEAVREKVASFINAASAEEIVFVRGTTEAINLVANSYGRTFIQPGDNLIITEMEHHANIVPWQMLAEAHGVEVRVLPLAEDGSLDVAQLPVLLDERTRLLAVTQISNVLGTLNPVKAMIAQAKAAGAVVLIDGAQSIMHQPVDVQDLDCDFFVFSGHKIYGPSGIGVLYGKRDLLQAMPPWEGGGAMIRQVSLRTGITYADSPWRFEAGSPNTGGIMGLGAALDYVTALGREDIQRYESSLMQYALEALTQVPDLTLYGPAERHGVIAFNLGQHHAYDVGSFLDRYGIAIRTGHHCAMPLMEHYGVPSMCRASLAVYTTREEIDRLVAGLQRIHRLLGS.

K226 carries the N6-(pyridoxal phosphate)lysine modification. C364 serves as the catalytic Cysteine persulfide intermediate.

It belongs to the class-V pyridoxal-phosphate-dependent aminotransferase family. Csd subfamily. As to quaternary structure, homodimer. Interacts with SufE and the SufBCD complex composed of SufB, SufC and SufD. The interaction with SufE is required to mediate the direct transfer of the sulfur atom from the S-sulfanylcysteine. Pyridoxal 5'-phosphate serves as cofactor.

Its subcellular location is the cytoplasm. It carries out the reaction (sulfur carrier)-H + L-cysteine = (sulfur carrier)-SH + L-alanine. The enzyme catalyses L-selenocysteine + AH2 = hydrogenselenide + L-alanine + A + H(+). The protein operates within cofactor biosynthesis; iron-sulfur cluster biosynthesis. Functionally, cysteine desulfurases mobilize the sulfur from L-cysteine to yield L-alanine, an essential step in sulfur metabolism for biosynthesis of a variety of sulfur-containing biomolecules. Component of the suf operon, which is activated and required under specific conditions such as oxidative stress and iron limitation. Acts as a potent selenocysteine lyase in vitro, that mobilizes selenium from L-selenocysteine. Selenocysteine lyase activity is however unsure in vivo. This Pectobacterium atrosepticum (strain SCRI 1043 / ATCC BAA-672) (Erwinia carotovora subsp. atroseptica) protein is Cysteine desulfurase.